The following is a 513-amino-acid chain: uncharacterized protein (513 aa).

Residues 1 to 48 (MGSSEEQSVPGDDFYEESGDLNTGLSLVLRPAKSNEGESSLSSPKGSK) form a disordered region. The span at 37 to 48 (GESSLSSPKGSK) shows a compositional bias: polar residues. Phosphoserine is present on residues serine 43, serine 84, and serine 123. Disordered regions lie at residues 210 to 229 (DGNH…GDLA), 236 to 287 (TRDS…GSKS), 390 to 414 (AKED…AEPP), and 453 to 481 (SVLS…TQGC).

This is an uncharacterized protein from Mus musculus (Mouse).